The sequence spans 253 residues: MDRPGETTHFGFRDVPLGDKQTLVNDVFHSVASRYDLMNDLMSGGLHRVWKDIMINALDPPRGDRPFALLDVAGGTGDISFRAAKAAGPGFHATVCDINSDMLAVGRERAAKRHLETQVDFVEGNAEALAFADRSFDAYTIAFGIRNVPQIDLALREAYRVLRPGSRFLCLEFSTVEMPGLDKLYDLFSFKVIPPLGRMITGDAESYQYLVESIRKFPKPNAFADMIRDAGFARVNWQTLSGGIVALHSGWRL.

Residues Thr76, Asp97, and 125–126 (NA) contribute to the S-adenosyl-L-methionine site.

This sequence belongs to the class I-like SAM-binding methyltransferase superfamily. MenG/UbiE family.

The enzyme catalyses a 2-demethylmenaquinol + S-adenosyl-L-methionine = a menaquinol + S-adenosyl-L-homocysteine + H(+). It catalyses the reaction a 2-methoxy-6-(all-trans-polyprenyl)benzene-1,4-diol + S-adenosyl-L-methionine = a 5-methoxy-2-methyl-3-(all-trans-polyprenyl)benzene-1,4-diol + S-adenosyl-L-homocysteine + H(+). It functions in the pathway quinol/quinone metabolism; menaquinone biosynthesis; menaquinol from 1,4-dihydroxy-2-naphthoate: step 2/2. Its pathway is cofactor biosynthesis; ubiquinone biosynthesis. In terms of biological role, methyltransferase required for the conversion of demethylmenaquinol (DMKH2) to menaquinol (MKH2) and the conversion of 2-polyprenyl-6-methoxy-1,4-benzoquinol (DDMQH2) to 2-polyprenyl-3-methyl-6-methoxy-1,4-benzoquinol (DMQH2). The polypeptide is Ubiquinone/menaquinone biosynthesis C-methyltransferase UbiE (Bradyrhizobium diazoefficiens (strain JCM 10833 / BCRC 13528 / IAM 13628 / NBRC 14792 / USDA 110)).